The primary structure comprises 1210 residues: Inner capsid protein VP3 (1210 aa).

A disordered region spans residues 1–28 (MPRTSRNVRATEVATTAIPPSNAATDTT). The C2H2-type zinc-finger motif lies at 113–136 (LRCQQCGAKFSSMTQLAEHVRTEH). The segment at 294-319 (PHAGPQVRSVQSQDQQVYSVDSGPDP) is disordered. The span at 299–315 (QVRSVQSQDQQVYSVDS) shows a compositional bias: low complexity.

This sequence belongs to the turreted BTV-fold inner capsid family. Homodecamer; each decamer is made up of two conformers of VP2, called VP2A and VP2B. 12 homodecamers assemble to form an icosahedral capsid. Interacts with VP6.

The protein localises to the virion. Its function is as follows. Inner capsid protein that self-assembles to form an icosahedral capsid with a T=2 symmetry, which consists of 120 copies of VP2, with channels at each of its five-fold vertices. This capsid constitutes the innermost concentric layer of the viral mature particle. This Aquareovirus A (isolate Chum salmon/Japan/CSRV/1981) (AQRV-A) protein is Inner capsid protein VP3 (S3).